Reading from the N-terminus, the 727-residue chain is Probable copper-importing P-type ATPase A (727 aa).

The Cytoplasmic portion of the chain corresponds to 1–94 (MATNTKMETF…QTYLRKMKFD (94 aa)). The HMA domain occupies 6–70 (KMETFVITGM…SVENIGYGAI (65 aa)). Cu(+)-binding residues include Cys17 and Cys20. Residues 95-115 (LIFSAILTLPLMLAMIAMMLG) traverse the membrane as a helical segment. At 116–119 (SHGP) the chain is on the extracellular side. Residues 120–137 (IVSFFHLSLVQLLFALPV) form a helical membrane-spanning segment. The Cytoplasmic portion of the chain corresponds to 138–161 (QFYVGWRFYKGAYHALKTKAPNMD). Residues 162–181 (VLVAIGTSAAFALSIYNGFF) traverse the membrane as a helical segment. At 182-187 (PSHSHD) the chain is on the extracellular side. The chain crosses the membrane as a helical span at residues 188 to 203 (LYFESSSMIITLILLG). The Cytoplasmic segment spans residues 204–341 (KYLEHTAKSK…PIQQIADKIS (138 aa)). The chain crosses the membrane as a helical span at residues 342–362 (GIFVPIVLFLALVTLLVTGWL). Topologically, residues 363-375 (TKDWQLALLHSVS) are extracellular. A helical transmembrane segment spans residues 376–396 (VLVIACPCALGLATPTAIMVG). The Cytoplasmic segment spans residues 397-678 (TGVGAHNGIL…AATLKKIKQN (282 aa)). Residue Asp425 is the 4-aspartylphosphate intermediate of the active site. 2 residues coordinate Mg(2+): Asp621 and Asp625. The helical transmembrane segment at 679–698 (LFWAFIYNTIGIPFAAFGFL) threads the bilayer. Over 699–700 (NP) the chain is Extracellular. The chain crosses the membrane as a helical span at residues 701-721 (IIAGGAMAFSSISVLLNSLSL). Residues 722 to 727 (NRKTIK) lie on the Cytoplasmic side of the membrane.

Belongs to the cation transport ATPase (P-type) (TC 3.A.3) family. Type IB subfamily. Monomer. Interacts with the copper chaperone CopZ.

The protein localises to the cell membrane. The enzyme catalyses Cu(+)(in) + ATP + H2O = Cu(+)(out) + ADP + phosphate + H(+). With respect to regulation, inhibited by vanadate. Probably involved in copper import under copper limiting conditions. This chain is Probable copper-importing P-type ATPase A (copA), found in Enterococcus hirae (strain ATCC 9790 / DSM 20160 / JCM 8729 / LMG 6399 / NBRC 3181 / NCIMB 6459 / NCDO 1258 / NCTC 12367 / WDCM 00089 / R).